A 355-amino-acid chain; its full sequence is 3-dehydroquinate synthase (355 aa).

NAD(+)-binding positions include 71-76 (EGEASK), 105-109 (GVVGD), 129-130 (TS), Lys142, and Lys151. Glu184, His246, and His263 together coordinate Zn(2+).

This sequence belongs to the sugar phosphate cyclases superfamily. Dehydroquinate synthase family. Requires Co(2+) as cofactor. Zn(2+) serves as cofactor. The cofactor is NAD(+).

The protein localises to the cytoplasm. The catalysed reaction is 7-phospho-2-dehydro-3-deoxy-D-arabino-heptonate = 3-dehydroquinate + phosphate. It functions in the pathway metabolic intermediate biosynthesis; chorismate biosynthesis; chorismate from D-erythrose 4-phosphate and phosphoenolpyruvate: step 2/7. Functionally, catalyzes the conversion of 3-deoxy-D-arabino-heptulosonate 7-phosphate (DAHP) to dehydroquinate (DHQ). The polypeptide is 3-dehydroquinate synthase (Streptococcus thermophilus (strain CNRZ 1066)).